Reading from the N-terminus, the 204-residue chain is UPF0056 membrane protein TC_0241 (204 aa).

Helical transmembrane passes span 8-28 (LTLLFYALFNSLGSLPVFVAL), 46-66 (IFALLTLILFITFGQGFFRLL), 68-88 (VSLPAFQLTGGILLGSLAINM), 107-127 (IFYPLAFPVITGPATITSTLG), 138-158 (LVLGAIMLAWAFSLITLFFSS), and 176-196 (FGISLALMAGNLMLKAISTAF).

This sequence belongs to the UPF0056 (MarC) family.

It localises to the cell membrane. This chain is UPF0056 membrane protein TC_0241, found in Chlamydia muridarum (strain MoPn / Nigg).